We begin with the raw amino-acid sequence, 234 residues long: Potassium/proton antiporter CemA (234 aa).

4 consecutive transmembrane segments (helical) span residues 8–28 (IPLR…WIPL), 117–137 (TICF…LFIL), 157–177 (ILFV…ELLI), and 193–213 (IILS…FKYW).

It belongs to the CemA family.

It is found in the plastid. The protein localises to the chloroplast inner membrane. The enzyme catalyses K(+)(in) + H(+)(out) = K(+)(out) + H(+)(in). Contributes to K(+)/H(+) antiport activity by supporting proton efflux to control proton extrusion and homeostasis in chloroplasts in a light-dependent manner to modulate photosynthesis. Prevents excessive induction of non-photochemical quenching (NPQ) under continuous-light conditions. Indirectly promotes efficient inorganic carbon uptake into chloroplasts. This is Potassium/proton antiporter CemA from Citrus sinensis (Sweet orange).